The sequence spans 348 residues: Dihydroorotase (348 aa).

Positions 17 and 19 each coordinate Zn(2+). Substrate is bound by residues 19-21 (HLR) and asparagine 45. Zn(2+) is bound by residues lysine 103, histidine 140, and histidine 178. Lysine 103 is modified (N6-carboxylysine). Histidine 140 is a substrate binding site. Residue leucine 223 participates in substrate binding. Aspartate 251 is a Zn(2+) binding site. Aspartate 251 is an active-site residue. Histidine 255 and alanine 267 together coordinate substrate.

It belongs to the metallo-dependent hydrolases superfamily. DHOase family. Class II DHOase subfamily. In terms of assembly, homodimer. Zn(2+) is required as a cofactor.

The enzyme catalyses (S)-dihydroorotate + H2O = N-carbamoyl-L-aspartate + H(+). Its pathway is pyrimidine metabolism; UMP biosynthesis via de novo pathway; (S)-dihydroorotate from bicarbonate: step 3/3. Its function is as follows. Catalyzes the reversible cyclization of carbamoyl aspartate to dihydroorotate. The protein is Dihydroorotase of Salmonella heidelberg (strain SL476).